Consider the following 143-residue polypeptide: MLTTAKANPLEALRSAKENKELSGQLEHHRSLRAIKLKVLLYREEREAAGVPPDVISRECATLHGSLLRNYMEEAQEARRLGAAELAQKTAERFASAFQVRPGSLGDAFDRRHREVERQAAEGARKEAIERRIVERVKRIKGE.

The region spanning 27–70 (EHHRSLRAIKLKVLLYREEREAAGVPPDVISRECATLHGSLLRN) is the CWF21 domain.

The protein belongs to the CWC21 family. Associates with the NTC complex (or PRP19-associated complex). The NTC complex associates with the spliceosome after the release of the U1 and U4 snRNAs and forms the CWC spliceosome subcomplex reminiscent of a late-stage spliceosome. Associates specifically with U5-containing snRNPs.

Its subcellular location is the cytoplasm. It is found in the nucleus. Essential protein involved in pre-mRNA cis- and trans-splicing. May function at or prior to the first catalytic step of splicing at the catalytic center of the spliceosome. May do so by stabilizing the catalytic center or the position of the RNA substrate. The protein is Pre-mRNA-splicing factor U5-Cwc21 of Trypanosoma brucei brucei (strain 927/4 GUTat10.1).